A 357-amino-acid chain; its full sequence is Histidinol-phosphate aminotransferase 2 (357 aa).

Lys-215 bears the N6-(pyridoxal phosphate)lysine mark.

The protein belongs to the class-II pyridoxal-phosphate-dependent aminotransferase family. Histidinol-phosphate aminotransferase subfamily. In terms of assembly, homodimer. Requires pyridoxal 5'-phosphate as cofactor.

The catalysed reaction is L-histidinol phosphate + 2-oxoglutarate = 3-(imidazol-4-yl)-2-oxopropyl phosphate + L-glutamate. It participates in amino-acid biosynthesis; L-histidine biosynthesis; L-histidine from 5-phospho-alpha-D-ribose 1-diphosphate: step 7/9. In Thiobacillus denitrificans (strain ATCC 25259 / T1), this protein is Histidinol-phosphate aminotransferase 2.